An 83-amino-acid chain; its full sequence is U25-theraphotoxin-Cg1a (83 aa).

Positions 1 to 23 (MRFHTLLFLSFLLLVSCALICTA) are cleaved as a signal peptide. A propeptide spanning residues 24–48 (QHPGLKKSGMFHENVGKGQHIEKKR) is cleaved from the precursor. Disulfide bonds link Cys-50/Cys-66, Cys-57/Cys-71, and Cys-65/Cys-81.

The protein belongs to the neurotoxin 07 (Beta/delta-agtx) family. 03 (aga-4) subfamily. JZTX sub-subfamily. In terms of tissue distribution, expressed by the venom gland.

It is found in the secreted. Inhibits TTX-sensitive sodium currents in rat dorsal root ganglion (DRG) neurons. The chain is U25-theraphotoxin-Cg1a from Chilobrachys guangxiensis (Chinese earth tiger tarantula).